The following is a 92-amino-acid chain: RNA-binding protein Hfq (92 aa).

One can recognise a Sm domain in the interval 9–68; it reads DPFLNALRRERVPVSVYLVNGIKLQGTIESFDQFVVLLRNTVSQMVYKHAISTVVPARNV. Residues 73-92 are disordered; that stretch reads GGGYVQSNEGNQAEDDDVEQ.

The protein belongs to the Hfq family. As to quaternary structure, homohexamer.

In terms of biological role, RNA chaperone that binds small regulatory RNA (sRNAs) and mRNAs to facilitate mRNA translational regulation in response to envelope stress, environmental stress and changes in metabolite concentrations. Also binds with high specificity to tRNAs. The sequence is that of RNA-binding protein Hfq from Xanthomonas axonopodis pv. citri (strain 306).